Reading from the N-terminus, the 350-residue chain is APMENSTYDYTNYDSLGTLDPSTPVDNTVRRLRPTTIVALVIYMAVFLVGVPGNALVVWVTALEAKRTVNAIWFLNLAVADLLSCLALPILFVSIIQEGHWPFGRAACSVLPSLILLNMYASILLLATISADRFLLVFNPIWCQNTRGAGLAWLACCVAWGLALLLTIPSFLYRKVLQDDYPPKTTCGVDYGHEGVRAERAVAIVRLVVGFLLPLFTLSVCYTFLLLRTWSRNGTRSTKTLKVVVAVVVSFFIFWLPYQVMGMILALLHPSSATFRWAIRLDPLCIALAYVNCCINPIIYVVAGKGFQGQLRKSLPSLLRNVLAEESVIQGSKSFSRSTVDTVADKCQAV.

Residues 1–36 (APMENSTYDYTNYDSLGTLDPSTPVDNTVRRLRPTT) are Extracellular-facing. Asn5 carries N-linked (GlcNAc...) asparagine glycosylation. 2 positions are modified to sulfotyrosine: Tyr10 and Tyr13. The chain crosses the membrane as a helical span at residues 37 to 63 (IVALVIYMAVFLVGVPGNALVVWVTAL). At 64 to 68 (EAKRT) the chain is on the cytoplasmic side. A helical membrane pass occupies residues 69–92 (VNAIWFLNLAVADLLSCLALPILF). The Extracellular portion of the chain corresponds to 93 to 109 (VSIIQEGHWPFGRAACS). A disulfide bridge links Cys108 with Cys187. A helical membrane pass occupies residues 110–131 (VLPSLILLNMYASILLLATISA). Over 132 to 152 (DRFLLVFNPIWCQNTRGAGLA) the chain is Cytoplasmic. Residues 153-173 (WLACCVAWGLALLLTIPSFLY) traverse the membrane as a helical segment. At 174–200 (RKVLQDDYPPKTTCGVDYGHEGVRAER) the chain is on the extracellular side. Residues 201–226 (AVAIVRLVVGFLLPLFTLSVCYTFLL) form a helical membrane-spanning segment. Residues 227–242 (LRTWSRNGTRSTKTLK) lie on the Cytoplasmic side of the membrane. A helical transmembrane segment spans residues 243–265 (VVVAVVVSFFIFWLPYQVMGMIL). Residues 266–282 (ALLHPSSATFRWAIRLD) are Extracellular-facing. A helical membrane pass occupies residues 283-303 (PLCIALAYVNCCINPIIYVVA). Residues 304–350 (GKGFQGQLRKSLPSLLRNVLAEESVIQGSKSFSRSTVDTVADKCQAV) are Cytoplasmic-facing. Ser314, Ser317, Ser327, Ser332, Ser334, and Ser338 each carry phosphoserine.

This sequence belongs to the G-protein coupled receptor 1 family. In terms of assembly, homodimer. May also form higher-order oligomers. Interacts (when phosphorylated) with ARRB1 and ARRB2; the interaction is associated with internalization of C5aR. Post-translationally, sulfation plays a critical role in the association of C5aR with C5a, but no significant role in the ability of the receptor to transduce a signal and mobilize calcium in response to a small peptide agonist. Phosphorylated on serine residues in response to C5a binding, resulting in internalization of the receptor and short-term desensitization to C5a.

It localises to the cell membrane. It is found in the cytoplasmic vesicle. In terms of biological role, receptor for the chemotactic and inflammatory peptide anaphylatoxin C5a. The ligand interacts with at least two sites on the receptor: a high-affinity site on the extracellular N-terminus, and a second site in the transmembrane region which activates downstream signaling events. Receptor activation stimulates chemotaxis, granule enzyme release, intracellular calcium release and superoxide anion production. This is C5a anaphylatoxin chemotactic receptor 1 (C5AR1) from Oryctolagus cuniculus (Rabbit).